The chain runs to 124 residues: Small ribosomal subunit protein uS12 (124 aa).

Asp89 carries the 3-methylthioaspartic acid modification.

It belongs to the universal ribosomal protein uS12 family. In terms of assembly, part of the 30S ribosomal subunit. Contacts proteins S8 and S17. May interact with IF1 in the 30S initiation complex.

In terms of biological role, with S4 and S5 plays an important role in translational accuracy. Its function is as follows. Interacts with and stabilizes bases of the 16S rRNA that are involved in tRNA selection in the A site and with the mRNA backbone. Located at the interface of the 30S and 50S subunits, it traverses the body of the 30S subunit contacting proteins on the other side and probably holding the rRNA structure together. The combined cluster of proteins S8, S12 and S17 appears to hold together the shoulder and platform of the 30S subunit. This Haemophilus ducreyi (strain 35000HP / ATCC 700724) protein is Small ribosomal subunit protein uS12.